Reading from the N-terminus, the 360-residue chain is Chorismate synthase (360 aa).

NADP(+) contacts are provided by Arg-48 and Arg-54. FMN contacts are provided by residues 125–127 (RSS), 246–247 (NA), Gly-286, 301–305 (KPTSS), and Arg-327.

Belongs to the chorismate synthase family. As to quaternary structure, homotetramer. FMNH2 is required as a cofactor.

It catalyses the reaction 5-O-(1-carboxyvinyl)-3-phosphoshikimate = chorismate + phosphate. It participates in metabolic intermediate biosynthesis; chorismate biosynthesis; chorismate from D-erythrose 4-phosphate and phosphoenolpyruvate: step 7/7. Catalyzes the anti-1,4-elimination of the C-3 phosphate and the C-6 proR hydrogen from 5-enolpyruvylshikimate-3-phosphate (EPSP) to yield chorismate, which is the branch point compound that serves as the starting substrate for the three terminal pathways of aromatic amino acid biosynthesis. This reaction introduces a second double bond into the aromatic ring system. This chain is Chorismate synthase, found in Actinobacillus pleuropneumoniae serotype 5b (strain L20).